The following is a 1477-amino-acid chain: MILRRLLLAGSLLLATSFTSAKKADGPKISATKFKDEPVNLFYFDDSDTVMFQDGKNGDVYVSRDAGANWDIVDGGTHWVTEDQAKSWREFTVDAELSRYEYPLVFHGKDSNRVMLLGHKCKGLDCKERTYYTTDGFKTVHLLMENGRHCAWAVSTPTFGEGLDLPKEVNDRIFCVVSGLHSSWAEANRLLYSDRFFKDEQGTEVPLDNGRAVSGVIRTASVQKYILAATKSARTNELALFVTDDASTWHRTEFDGHRVEEDAYTILESTSYSLQVDVVSTYSSTIGTLFTSNSNGTYFTRNIKHTNRNLYGFVDFEKISSIQGIILVNTVKNWEDVEKSNGVQKKVISKISFDDGRTFQPLKVGKHDLHLHSVTDATNSGRVFSSPAPGLVMGVGNTGGHLKDYLDGDLFVSDDAGINWRKALDDAHKYEFGDQGSVIVAVFDEGRTDKISYSLDHGKNWHKASLPDGVQIRAKVLTTAPGSTTLKFLLLGSAKADIGMEYYIISIDFAEMEERTCEEKDFENWPARLNEKNEPDCLMGHKQFYRRRKAQADCFIKKKFEEPAPEFERCKCTEEDFECDFNFVRGEDGKSCIPSRSLIAPEGVCKNPDDKFIGSSGFRLIPGNVCIREGGVDLDKQTERVCSETFKNPPAGQIVVEKSFFTADYYKDYFYLERKESSKGEDETVIMITSEQHIFLSRDHGKKWKRILEEEKITRIEPHRFFDDVAYFLTNNGDGWYTLDRGDTFRKFKAPLPPNQDKLPVLSFHPDRRDWLIWTGADECNGNGGNCHSVAYYTTNLGGEWHFLMRYVRRCEFISRDARGSSDKLVFCEQFENENPSNKHLQLLSTEDWFAEKRLHYSNILDFATMQEFIIVAIRGENPQDSLRIGVSIDGKTFADAELPANVQIPIQRAYTVLESRTHAAFLLVTINNMEDHEYGSILKSNSNGTSYVLSLSAVNRNSRGYADFEKMQGLEGVAMANVVGNVADVENGAAKKFRTMITHNDGAEWTLVRPPDKDSEGRSYACSTKGGKPTDACALHLHSYTERADPRDTYSSPSAVGIMIGTGNVGDYLSLKSKADTFITRDAGITWEEVKKGKYQWEFGDSGSIIVLVTESTPTKTLLYSLDEGRSWKDFEFSEVEMQIQDISTVPSDTSRNFLLWGKEVGQGKKPGLATVNIDFSGLKERSKHIPFNLMDASSVTEPNITANGPTRIAITAENYSTWTPLGISANAHDRIMNGNKTDLLICSDYNYEPQSDGSCARVAGLEPLDPKLVCTENPKAIEWYEPTGYRRIPLTKCQGGKQLNHIVAHPCPNKEEEFFKKHPRLRGIGLFFVILIPICLAATSGYYVYNHWDGKFGRIRLGETGSGGLFDRDSLLVSIPVSMVAGVVAVITALPLLVSSLWRSVSGYVRVPGGASSRRPYSSRDSFAARRNDYTGVVEDEDELLGTDDFDDDEEGDERNGQMKNNGHVNEAITIVFLF.

An N-terminal signal peptide occupies residues 1–21 (MILRRLLLAGSLLLATSFTSA). Residues 22 to 1325 (KKADGPKISA…FFKKHPRLRG (1304 aa)) are Lumenal-facing. The stretch at 61-71 (YVSRDAGANWD) is one BNR 1 repeat. N-linked (GlcNAc...) asparagine glycosylation is present at N295. 4 BNR repeats span residues 351 to 360 (ISFDDGRTFQ), 411 to 421 (FVSDDAGINWR), 453 to 463 (YSLDHGKNWHK), and 695 to 705 (FLSRDHGKKWK). N-linked (GlcNAc...) asparagine glycosylation is present at N944. 2 BNR repeats span residues 1079 to 1089 (FITRDAGITWE) and 1121 to 1130 (YSLDEGRSWK). 3 N-linked (GlcNAc...) asparagine glycosylation sites follow: N1201, N1216, and N1237. A helical membrane pass occupies residues 1326–1346 (IGLFFVILIPICLAATSGYYV). The Cytoplasmic segment spans residues 1347–1372 (YNHWDGKFGRIRLGETGSGGLFDRDS). Residues 1373–1393 (LLVSIPVSMVAGVVAVITALP) traverse the membrane as a helical segment. Residues 1394–1477 (LLVSSLWRSV…NEAITIVFLF (84 aa)) are Lumenal-facing. A compositionally biased stretch (acidic residues) spans 1443–1455 (LGTDDFDDDEEGD). Residues 1443–1463 (LGTDDFDDDEEGDERNGQMKN) are disordered.

It belongs to the VPS10 family.

It is found in the golgi apparatus. The protein resides in the trans-Golgi network membrane. Its subcellular location is the prevacuolar compartment membrane. Its function is as follows. Functions as a sorting receptor in the Golgi compartment required for the intracellular sorting and delivery of soluble vacuolar proteins, like carboxypeptidase Y (CPY) and proteinase A. Executes multiple rounds of sorting by cycling between the late Golgi and a prevacuolar endosome-like compartment. The polypeptide is Vacuolar protein sorting/targeting protein 10 (VPS10) (Ajellomyces capsulatus (strain NAm1 / WU24) (Darling's disease fungus)).